Here is a 169-residue protein sequence, read N- to C-terminus: Peptide methionine sulfoxide reductase MsrA (169 aa).

Residue C10 is part of the active site.

This sequence belongs to the MsrA Met sulfoxide reductase family.

The enzyme catalyses L-methionyl-[protein] + [thioredoxin]-disulfide + H2O = L-methionyl-(S)-S-oxide-[protein] + [thioredoxin]-dithiol. It catalyses the reaction [thioredoxin]-disulfide + L-methionine + H2O = L-methionine (S)-S-oxide + [thioredoxin]-dithiol. Has an important function as a repair enzyme for proteins that have been inactivated by oxidation. Catalyzes the reversible oxidation-reduction of methionine sulfoxide in proteins to methionine. The protein is Peptide methionine sulfoxide reductase MsrA of Streptococcus pyogenes serotype M12 (strain MGAS2096).